Reading from the N-terminus, the 475-residue chain is Lactate utilization protein B (475 aa).

2 consecutive 4Fe-4S ferredoxin-type domains span residues 304 to 334 and 353 to 382; these read GTEF…GHSY and YDDY…LHEL. 7 residues coordinate [4Fe-4S] cluster: cysteine 313, cysteine 316, cysteine 319, cysteine 323, cysteine 366, cysteine 369, and cysteine 373.

Belongs to the LutB/YkgF family.

Its function is as follows. Is involved in L-lactate degradation and allows cells to grow with lactate as the sole carbon source. Has probably a role as an electron transporter during oxidation of L-lactate. The protein is Lactate utilization protein B of Geobacillus sp. (strain WCH70).